A 213-amino-acid polypeptide reads, in one-letter code: tRNA (guanine-N(7)-)-methyltransferase (213 aa).

E44, E69, N96, and D118 together coordinate S-adenosyl-L-methionine. D118 is a catalytic residue. A substrate-binding site is contributed by K122. Positions 124–129 are interaction with RNA; the sequence is RHEKRR. Residues D154 and 192–195 each bind substrate; that span reads TEYE.

Belongs to the class I-like SAM-binding methyltransferase superfamily. TrmB family.

It catalyses the reaction guanosine(46) in tRNA + S-adenosyl-L-methionine = N(7)-methylguanosine(46) in tRNA + S-adenosyl-L-homocysteine. Its pathway is tRNA modification; N(7)-methylguanine-tRNA biosynthesis. In terms of biological role, catalyzes the formation of N(7)-methylguanine at position 46 (m7G46) in tRNA. This Latilactobacillus sakei subsp. sakei (strain 23K) (Lactobacillus sakei subsp. sakei) protein is tRNA (guanine-N(7)-)-methyltransferase.